Here is a 700-residue protein sequence, read N- to C-terminus: Calpain-2 catalytic subunit (700 aa).

A2 carries the N-acetylalanine modification. A propeptide spans A2–G19 (anchors to the small subunit). The 300-residue stretch at L45 to T344 folds into the Calpain catalytic domain. The Ca(2+) site is built by I89, G91, and D96. C105 is an active-site residue. Ca(2+) is bound by residues E175, Q229, and K230. Active-site residues include H262 and N286. The Ca(2+) site is built by E292, D299, Q319, and E323. The domain III stretch occupies residues P345–D514. A linker region spans residues E515–D529. The domain IV stretch occupies residues I530–L700. The Ca(2+) site is built by A542, D545, E547, E552, D585, D587, S589, K591, E596, D615, D617, S619, T621, E626, D658, and N661. EF-hand domains are found at residues F572–Q605 and T602–K637. One can recognise an EF-hand 3 domain in the interval V667 to L700.

It belongs to the peptidase C2 family. As to quaternary structure, forms a heterodimer with a small (regulatory) subunit (CAPNS1). Interacts with CPEB3; this leads to cleavage of CPEB3. It depends on Ca(2+) as a cofactor. As to expression, ubiquitous.

The protein localises to the cytoplasm. Its subcellular location is the cell membrane. The catalysed reaction is Broad endopeptidase specificity.. Activated by 200-1000 micromolar concentrations of calcium and inhibited by calpastatin. Its function is as follows. Calcium-regulated non-lysosomal thiol-protease which catalyze limited proteolysis of substrates involved in cytoskeletal remodeling and signal transduction. Proteolytically cleaves MYOC at 'Arg-226'. Proteolytically cleaves CPEB3 following neuronal stimulation which abolishes CPEB3 translational repressor activity, leading to translation of CPEB3 target mRNAs. This is Calpain-2 catalytic subunit (Capn2) from Rattus norvegicus (Rat).